The chain runs to 137 residues: Phosphoribosyl-AMP cyclohydrolase (137 aa).

Aspartate 84 is a binding site for Mg(2+). Cysteine 85 is a Zn(2+) binding site. The Mg(2+) site is built by aspartate 86 and aspartate 88. 2 residues coordinate Zn(2+): cysteine 101 and cysteine 108.

The protein belongs to the PRA-CH family. In terms of assembly, homodimer. Mg(2+) is required as a cofactor. It depends on Zn(2+) as a cofactor.

The protein resides in the cytoplasm. The catalysed reaction is 1-(5-phospho-beta-D-ribosyl)-5'-AMP + H2O = 1-(5-phospho-beta-D-ribosyl)-5-[(5-phospho-beta-D-ribosylamino)methylideneamino]imidazole-4-carboxamide. The protein operates within amino-acid biosynthesis; L-histidine biosynthesis; L-histidine from 5-phospho-alpha-D-ribose 1-diphosphate: step 3/9. Catalyzes the hydrolysis of the adenine ring of phosphoribosyl-AMP. The polypeptide is Phosphoribosyl-AMP cyclohydrolase (Prosthecochloris aestuarii (strain DSM 271 / SK 413)).